We begin with the raw amino-acid sequence, 214 residues long: NAD(P)H-quinone oxidoreductase subunit 6, chloroplastic (214 aa).

The next 5 membrane-spanning stretches (helical) occupy residues 10 to 30, 32 to 52, 61 to 81, 102 to 122, and 163 to 183; these read FSLFFLEGAVLVGALGVVLLP, ILYSAFLLGGVLMSIAGIYLL, AQVLIYVGAINVLILFAIMLV, IIGLTCIGLAGFLIDMIVTTP, and LLPFEVISLLLLVTLVGAIVI.

It belongs to the complex I subunit 6 family. As to quaternary structure, NDH is composed of at least 16 different subunits, 5 of which are encoded in the nucleus.

Its subcellular location is the plastid. It localises to the chloroplast thylakoid membrane. It catalyses the reaction a plastoquinone + NADH + (n+1) H(+)(in) = a plastoquinol + NAD(+) + n H(+)(out). It carries out the reaction a plastoquinone + NADPH + (n+1) H(+)(in) = a plastoquinol + NADP(+) + n H(+)(out). Its function is as follows. NDH shuttles electrons from NAD(P)H:plastoquinone, via FMN and iron-sulfur (Fe-S) centers, to quinones in the photosynthetic chain and possibly in a chloroplast respiratory chain. The immediate electron acceptor for the enzyme in this species is believed to be plastoquinone. Couples the redox reaction to proton translocation, and thus conserves the redox energy in a proton gradient. This chain is NAD(P)H-quinone oxidoreductase subunit 6, chloroplastic (ndhG), found in Chlorokybus atmophyticus (Soil alga).